We begin with the raw amino-acid sequence, 890 residues long: Translation initiation factor IF-2 (890 aa).

2 disordered regions span residues 31 to 164 (KLAQ…PAEP) and 189 to 266 (FKAP…ESLK). Positions 42–54 (SSSEKPSAKEKSV) are enriched in basic and acidic residues. Over residues 55–72 (KVALAATSTPTASAEQAS) the composition is skewed to low complexity. Residues 114–128 (PEPELEVVDEVCDES) are compositionally biased toward acidic residues. Basic and acidic residues-rich tracts occupy residues 149 to 163 (PQEKELEPKPVKPAE) and 242 to 266 (PKRDAGKKNLTDFRDRSKKSDESLK). The tr-type G domain maps to 395-564 (IRSPIVAFMG…ALQAEVLELK (170 aa)). Positions 404–411 (GHVDHGKT) are G1. 404–411 (GHVDHGKT) is a GTP binding site. Positions 429 to 433 (AITQH) are G2. Residues 450 to 453 (DTPG) form a G3 region. GTP is bound by residues 450-454 (DTPGH) and 504-507 (NKCD). The interval 504–507 (NKCD) is G4. The G5 stretch occupies residues 540-542 (SAK).

Belongs to the TRAFAC class translation factor GTPase superfamily. Classic translation factor GTPase family. IF-2 subfamily.

Its subcellular location is the cytoplasm. Functionally, one of the essential components for the initiation of protein synthesis. Protects formylmethionyl-tRNA from spontaneous hydrolysis and promotes its binding to the 30S ribosomal subunits. Also involved in the hydrolysis of GTP during the formation of the 70S ribosomal complex. This is Translation initiation factor IF-2 (infB) from Chlamydia pneumoniae (Chlamydophila pneumoniae).